Reading from the N-terminus, the 37-residue chain is Large ribosomal subunit protein bL36c (37 aa).

This sequence belongs to the bacterial ribosomal protein bL36 family.

The protein localises to the plastid. It is found in the chloroplast. This is Large ribosomal subunit protein bL36c (rpl36) from Cyanidium caldarium (Red alga).